We begin with the raw amino-acid sequence, 66 residues long: Rho-elapitoxin-Da1b (66 aa).

4 cysteine pairs are disulfide-bonded: Cys3-Cys24, Cys17-Cys42, Cys46-Cys58, and Cys59-Cys64.

It belongs to the three-finger toxin family. Short-chain subfamily. Aminergic toxin sub-subfamily. As to expression, expressed by the venom gland.

It is found in the secreted. Functionally, non-competitive antagonist of alpha-2 adrenergic receptors (ADRA2) in smooth muscles, and partial antagonist of D3 dopamine receptors (DRD3) (inhibits 25% of methylspiperone binding to this receptor). Also shows a low antagonism on D2 dopamine receptors (DRD2) (short isoform). Shows high affinity to adrenergic receptors (Ki=14 nM (ADRA2A), Ki=73 nM (ADRA2B), and Ki=38 nM (ADRA2C)). Increases heart rate and blood catecholamine concentrations. The chain is Rho-elapitoxin-Da1b from Dendroaspis angusticeps (Eastern green mamba).